A 262-amino-acid polypeptide reads, in one-letter code: Bacteriorhodopsin (262 aa).

A propeptide spanning residues 1-13 (MLELLPTAVEGVS) is cleaved from the precursor. Residue glutamine 14 is modified to Pyrrolidone carboxylic acid. The Extracellular portion of the chain corresponds to 14 to 22 (QAQITGRPE). Residues 23–42 (WIWLALGTALMGLGTLYFLV) form a helical membrane-spanning segment. Residues 43 to 56 (KGMGVSDPDAKKFY) are Cytoplasmic-facing. Residues 57 to 75 (AITTLVPAIAFTMYLSMLL) traverse the membrane as a helical segment. Residues 76–92 (GYGLTMVPFGGEQNPIY) are Extracellular-facing. A helical transmembrane segment spans residues 93–109 (WARYADWLFTTPLLLLD). The Cytoplasmic segment spans residues 110–120 (LALLVDADQGT). The helical transmembrane segment at 121–140 (ILALVGADGIMIGTGLVGAL) threads the bilayer. Topologically, residues 141 to 147 (TKVYSYR) are extracellular. A helical membrane pass occupies residues 148–167 (FVWWAISTAAMLYILYVLFF). Topologically, residues 168 to 185 (GFTSKAESMRPEVASTFK) are cytoplasmic. A helical transmembrane segment spans residues 186–204 (VLRNVTVVLWSAYPVVWLI). The Extracellular segment spans residues 205–216 (GSEGAGIVPLNI). The helical transmembrane segment at 217–236 (ETLLFMVLDVSAKVGFGLIL) threads the bilayer. Lysine 229 is modified (N6-(retinylidene)lysine). The Cytoplasmic portion of the chain corresponds to 237–262 (LRSRAIFGEAEAPEPSAGDGAAATSD).

Homotrimer. Post-translationally, the covalent binding of retinal to the apoprotein, bacterioopsin, generates bacteriorhodopsin.

It localises to the cell membrane. Its function is as follows. Light-driven proton pump. This is Bacteriorhodopsin (bop) from Halobacterium salinarum (strain ATCC 700922 / JCM 11081 / NRC-1) (Halobacterium halobium).